Here is a 198-residue protein sequence, read N- to C-terminus: Recombination protein RecR (198 aa).

Residues 57–72 form a C4-type zinc finger; sequence CSVCGHITENDPCYIC. Residues 80–175 enclose the Toprim domain; that stretch reads SVICVVEDDK…KVTRLAQGLS (96 aa).

This sequence belongs to the RecR family.

In terms of biological role, may play a role in DNA repair. It seems to be involved in an RecBC-independent recombinational process of DNA repair. It may act with RecF and RecO. The protein is Recombination protein RecR of Staphylococcus haemolyticus (strain JCSC1435).